Here is a 26-residue protein sequence, read N- to C-terminus: Protein YsdD (26 aa).

Residues 1–26 (MTIDKNWLNRSNKDPGRSLRFTHQPV) are disordered.

This Escherichia coli (strain K12) protein is Protein YsdD.